The following is a 253-amino-acid chain: DNA repair protein RecO (253 aa).

This sequence belongs to the RecO family.

In terms of biological role, involved in DNA repair and RecF pathway recombination. The protein is DNA repair protein RecO of Streptococcus agalactiae serotype III (strain NEM316).